A 515-amino-acid chain; its full sequence is Bifunctional purine biosynthesis protein PurH (515 aa).

An MGS-like domain is found at 1 to 145 (MTKRVLISVS…KNHASVTVVV (145 aa)).

The protein belongs to the PurH family.

The catalysed reaction is (6R)-10-formyltetrahydrofolate + 5-amino-1-(5-phospho-beta-D-ribosyl)imidazole-4-carboxamide = 5-formamido-1-(5-phospho-D-ribosyl)imidazole-4-carboxamide + (6S)-5,6,7,8-tetrahydrofolate. The enzyme catalyses IMP + H2O = 5-formamido-1-(5-phospho-D-ribosyl)imidazole-4-carboxamide. It functions in the pathway purine metabolism; IMP biosynthesis via de novo pathway; 5-formamido-1-(5-phospho-D-ribosyl)imidazole-4-carboxamide from 5-amino-1-(5-phospho-D-ribosyl)imidazole-4-carboxamide (10-formyl THF route): step 1/1. The protein operates within purine metabolism; IMP biosynthesis via de novo pathway; IMP from 5-formamido-1-(5-phospho-D-ribosyl)imidazole-4-carboxamide: step 1/1. The sequence is that of Bifunctional purine biosynthesis protein PurH from Streptococcus pneumoniae (strain Taiwan19F-14).